Here is a 61-residue protein sequence, read N- to C-terminus: MAKLAVTLTRSMIGRPENQRVTTRTLGLRKMHQTVVVPDNAAMRGMINHVSHLLTVKEIQE.

Belongs to the universal ribosomal protein uL30 family. In terms of assembly, part of the 50S ribosomal subunit.

The sequence is that of Large ribosomal subunit protein uL30 from Exiguobacterium sibiricum (strain DSM 17290 / CCUG 55495 / CIP 109462 / JCM 13490 / 255-15).